Consider the following 290-residue polypeptide: Acetylglutamate kinase (290 aa).

Residues 65 to 66 (GG), Arg-87, and Asn-186 each bind substrate.

The protein belongs to the acetylglutamate kinase family. ArgB subfamily.

The protein resides in the cytoplasm. The enzyme catalyses N-acetyl-L-glutamate + ATP = N-acetyl-L-glutamyl 5-phosphate + ADP. The protein operates within amino-acid biosynthesis; L-arginine biosynthesis; N(2)-acetyl-L-ornithine from L-glutamate: step 2/4. Catalyzes the ATP-dependent phosphorylation of N-acetyl-L-glutamate. The chain is Acetylglutamate kinase from Mycobacterium sp. (strain KMS).